The following is a 313-amino-acid chain: Ankyrin repeat family A protein 2 (313 aa).

ANK repeat units follow at residues 148–180 (ANSL…HTDE), 181–213 (EGFT…LLGK), 214–246 (GRES…EYDW), 247–279 (NGGT…IETD), and 280–313 (SGYN…NIKE).

Interacts (via ANK repeats) with CCDC8 (via PxLPxI/L motif); mediates the interaction with the 3M complex which is composed of CCDC8, CUL7 and OBSL1. Interacts (via ANK repeats) with HDAC4 (via PxLPxI/L motif). Interacts (via ANK repeats) with HDAC5 (via PxLPxI/L motif). Interacts (via ANK repeats) with LRP2/megalin (via PxLPxI/L motif). Interacts (via ANK repeats) with RFX7 (via PxLPxI/L motif). Interacts with AHRR. Interacts with NEK6.

Its subcellular location is the cytoplasm. The protein resides in the cytoskeleton. It is found in the membrane. Functionally, may regulate the interaction between the 3M complex and the histone deacetylases HDAC4 and HDAC5. May also regulate LRP2/megalin. The chain is Ankyrin repeat family A protein 2 (ANKRA2) from Homo sapiens (Human).